The chain runs to 137 residues: Nucleoside diphosphate kinase (137 aa).

Lysine 9, phenylalanine 57, arginine 85, threonine 91, arginine 102, and asparagine 112 together coordinate ATP. The active-site Pros-phosphohistidine intermediate is histidine 115.

It belongs to the NDK family. As to quaternary structure, homotetramer. The cofactor is Mg(2+).

The protein resides in the cytoplasm. The enzyme catalyses a 2'-deoxyribonucleoside 5'-diphosphate + ATP = a 2'-deoxyribonucleoside 5'-triphosphate + ADP. It catalyses the reaction a ribonucleoside 5'-diphosphate + ATP = a ribonucleoside 5'-triphosphate + ADP. Major role in the synthesis of nucleoside triphosphates other than ATP. The ATP gamma phosphate is transferred to the NDP beta phosphate via a ping-pong mechanism, using a phosphorylated active-site intermediate. This chain is Nucleoside diphosphate kinase, found in Leptospira biflexa serovar Patoc (strain Patoc 1 / ATCC 23582 / Paris).